We begin with the raw amino-acid sequence, 445 residues long: Tubulin beta chain (445 aa).

8 residues coordinate GTP: glutamine 11, glutamate 69, serine 138, glycine 142, threonine 143, glycine 144, asparagine 204, and asparagine 226. Mg(2+) is bound at residue glutamate 69. The interval 426-445 is disordered; that stretch reads QDATAEEEGEFEEEEGDVEA. Residues 429–445 show a composition bias toward acidic residues; it reads TAEEEGEFEEEEGDVEA.

It belongs to the tubulin family. In terms of assembly, dimer of alpha and beta chains. A typical microtubule is a hollow water-filled tube with an outer diameter of 25 nm and an inner diameter of 15 nM. Alpha-beta heterodimers associate head-to-tail to form protofilaments running lengthwise along the microtubule wall with the beta-tubulin subunit facing the microtubule plus end conferring a structural polarity. Microtubules usually have 13 protofilaments but different protofilament numbers can be found in some organisms and specialized cells. Interacts with DCX/apicortin; the interaction stabilizes microtubule assembly. Mg(2+) serves as cofactor.

Its subcellular location is the cytoplasm. The protein resides in the cytoskeleton. In terms of biological role, tubulin is the major constituent of microtubules, a cylinder consisting of laterally associated linear protofilaments composed of alpha- and beta-tubulin heterodimers. Microtubules grow by the addition of GTP-tubulin dimers to the microtubule end, where a stabilizing cap forms. Below the cap, tubulin dimers are in GDP-bound state, owing to GTPase activity of alpha-tubulin. This chain is Tubulin beta chain, found in Plasmodium falciparum (isolate 3D7).